The following is a 201-amino-acid chain: Small ribosomal subunit protein uS4 (201 aa).

In terms of domain architecture, S4 RNA-binding spans 91-157 (SRLDNVIYRA…VPFQIARETA (67 aa)).

It belongs to the universal ribosomal protein uS4 family. Part of the 30S ribosomal subunit. Contacts protein S5. The interaction surface between S4 and S5 is involved in control of translational fidelity.

Functionally, one of the primary rRNA binding proteins, it binds directly to 16S rRNA where it nucleates assembly of the body of the 30S subunit. Its function is as follows. With S5 and S12 plays an important role in translational accuracy. The polypeptide is Small ribosomal subunit protein uS4 (Mycobacterium tuberculosis (strain ATCC 25177 / H37Ra)).